The sequence spans 146 residues: Hemoglobin subunit beta (146 aa).

Residue Val1 is modified to N-acetylvaline. The Globin domain maps to 2 to 146 (HLTPEEKVAV…VANALAHKYH (145 aa)). Residue Thr12 is modified to Phosphothreonine. Ser44 is subject to Phosphoserine. Lys59 bears the N6-acetyllysine mark. Heme b is bound at residue His63. The residue at position 82 (Lys82) is an N6-acetyllysine. Residue His92 participates in heme b binding. Cys93 carries the S-nitrosocysteine modification. An N6-acetyllysine modification is found at Lys144.

The protein belongs to the globin family. As to quaternary structure, heterotetramer of two alpha chains and two beta chains. As to expression, red blood cells.

Functionally, involved in oxygen transport from the lung to the various peripheral tissues. The chain is Hemoglobin subunit beta (HBB) from Cercocebus atys (Sooty mangabey).